A 277-amino-acid chain; its full sequence is Caspase-3 (277 aa).

The residue at position 1 (Met1) is an N-acetylmethionine. 2 consecutive propeptides follow at residues 1–9 and 10–28; these read MENTENSVD and SKSI…KSVD. A compositionally biased stretch (polar residues) spans 1 to 10; sequence MENTENSVDS. Residues 1–25 are disordered; it reads MENTENSVDSKSIKNSEPKIIHGSK. At Lys11 the chain carries N6-acetyllysine. Residues 11–20 are compositionally biased toward basic and acidic residues; that stretch reads KSIKNSEPKI. Ser26 is modified (phosphoserine). Residues His121 and Cys163 contribute to the active site. S-nitrosocysteine; in inhibited form is present on Cys163.

This sequence belongs to the peptidase C14A family. In terms of assembly, heterotetramer that consists of two anti-parallel arranged heterodimers, each one formed by a 17 kDa (p17) and a 12 kDa (p12) subunit. Interacts with BIRC6/bruce. In terms of processing, cleavage by granzyme B, caspase-6, caspase-8 and caspase-10 generates the two active subunits. Additional processing of the propeptides is likely due to the autocatalytic activity of the activated protease. Active heterodimers between the small subunit of caspase-7 protease and the large subunit of caspase-3 also occur and vice versa. Post-translationally, S-nitrosylated on its catalytic site cysteine in unstimulated cell lines and denitrosylated upon activation of the Fas apoptotic pathway, associated with an increase in intracellular caspase activity. Fas therefore activates caspase-3 not only by inducing the cleavage of the caspase zymogen to its active subunits, but also by stimulating the denitrosylation of its active site thiol. Ubiquitinated by BIRC6; this activity is inhibited by DIABLO/SMAC.

The protein localises to the cytoplasm. It carries out the reaction Strict requirement for an Asp residue at positions P1 and P4. It has a preferred cleavage sequence of Asp-Xaa-Xaa-Asp-|- with a hydrophobic amino-acid residue at P2 and a hydrophilic amino-acid residue at P3, although Val or Ala are also accepted at this position.. With respect to regulation, inhibited by BIRC6; following inhibition of BIRC6-caspase binding by DIABLO/SMAC, BIRC6 is subjected to caspase cleavage, leading to an increase in active caspases. In terms of biological role, involved in the activation cascade of caspases responsible for apoptosis execution. At the onset of apoptosis, it proteolytically cleaves poly(ADP-ribose) polymerase PARP1 at a '216-Asp-|-Gly-217' bond. Cleaves and activates sterol regulatory element binding proteins (SREBPs) between the basic helix-loop-helix leucine zipper domain and the membrane attachment domain. Cleaves and activates caspase-6, -7 and -9 (CASP6, CASP7 and CASP9, respectively). Cleaves and inactivates interleukin-18 (IL18). Triggers cell adhesion in sympathetic neurons through RET cleavage. Cleaves IL-1 beta between an Asp and an Ala, releasing the mature cytokine which is involved in a variety of inflammatory processes. Cleaves and inhibits serine/threonine-protein kinase AKT1 in response to oxidative stress. Acts as an inhibitor of type I interferon production during virus-induced apoptosis by mediating cleavage of antiviral proteins CGAS, IRF3 and MAVS, thereby preventing cytokine overproduction. Also involved in pyroptosis by mediating cleavage and activation of gasdermin-E (GSDME). Cleaves XRCC4 and phospholipid scramblase proteins XKR4, XKR8 and XKR9, leading to promote phosphatidylserine exposure on apoptotic cell surface. Cleaves BIRC6 following inhibition of BIRC6-caspase binding by DIABLO/SMAC. The polypeptide is Caspase-3 (CASP3) (Saimiri boliviensis boliviensis (Bolivian squirrel monkey)).